Consider the following 592-residue polypeptide: MRKAPLLRFTLASLALACSQAFAAPSPYSGMIVFGDSLSDAGQFGGVRFTNLDANGNYAPVSPMILGGQLGVNPTELGPSTSPLNPVLGLPDGNNWAVGGYTTQQILDSITSTSETVIPPGRPGAGQVLREKPGYLANGLRADPNALYYLTGGGNDFLQGLVNSPADAAAAGARLAASAQALQQGGARYIMVWLLPDLGQTPNFSGTPQQTPLSLLSGVFNQSLLSQLGQIDAEIIPLNVPMLLSEALASPSQFGLATGQNLVGTCSSGEGCVENPVYGINGTTPDPTKLLFNDLVHPTIAGQQLIADYAYSILSAPWELTLLPEMAHTSLRAHQDELRNQWQTPWQAVGSGKPLSPAAPRTWISTARAGASGDGRGYNLTVGGSYRLNDAWRLGLAGGVYRQKLEAGGHDSDYTLNSYLASAFAQYRQDRWWADAALTAGHLDYSDLKRTFALGVNDRSEKGDTDGEAWAISGRLGYNLAADSSNWQLAPFISADYARVKVDGYDEKSGRSTALGFDDQARTSRRLGLGLQGSVQVLPSTRLFAEVAQEHEFEDDRQDVTMHLTSLPANDFTLTGYTPHTAPDPGEPGGKP.

The first 23 residues, methionine 1–alanine 23, serve as a signal peptide directing secretion. Catalysis depends on serine 37, which acts as the Nucleophile. Catalysis depends on residues aspartate 294 and histidine 297. The 259-residue stretch at histidine 334–proline 592 folds into the Autotransporter domain. A disordered region spans residues phenylalanine 572–proline 592.

The protein belongs to the 'GDSL' lipolytic enzyme family.

This is an uncharacterized protein from Pseudomonas putida (Arthrobacter siderocapsulatus).